Consider the following 506-residue polypeptide: Putative basic amino acid antiporter YfcC (506 aa).

A run of 13 helical transmembrane segments spans residues 19-39, 107-127, 148-168, 171-191, 208-228, 231-251, 287-307, 310-330, 352-372, 398-418, 419-439, 442-462, and 485-505; these read LVII…VPVG, GTAV…GIVM, ILFI…FGMG, AVAF…DSIT, WMNP…VLSG, LRIV…MVYA, WLVL…VIVN, FIPE…IIGV, MMIA…LVGN, AVAA…VTSG, SGQA…VGVN, VTVL…PTSA, and LLGL…LMGY.

To H.influenzae HI_0594. This sequence to B.subtilis YcgA.

The protein resides in the cell inner membrane. Metabolomic profiling of different yfcC over-expression and deletion strains suggests that it may affect the glyoxylate shunt. The sequence is that of Putative basic amino acid antiporter YfcC (yfcC) from Escherichia coli (strain K12).